Here is a 103-residue protein sequence, read N- to C-terminus: Small ribosomal subunit protein uS10 (103 aa).

The protein belongs to the universal ribosomal protein uS10 family. Part of the 30S ribosomal subunit.

In terms of biological role, involved in the binding of tRNA to the ribosomes. The chain is Small ribosomal subunit protein uS10 from Campylobacter jejuni subsp. jejuni serotype O:6 (strain 81116 / NCTC 11828).